The primary structure comprises 284 residues: Cuticle collagen dpy-5 (284 aa).

The disordered stretch occupies residues 88–284 (GLPSQGCPAG…PCPERKRRRV (197 aa)). Triple-helical region regions lie at residues 94–126 (CPAGAPGNPGAPGEPGGTGPDGKNGPTGLPGLN) and 143–270 (GPPG…VGAD). A compositionally biased stretch (gly residues) spans 106–115 (GEPGGTGPDG). Residues 163 to 177 (AGKRGTPGKDGEPGR) show a composition bias toward basic and acidic residues. Low complexity-rich tracts occupy residues 181–193 (IGDQGTPGQDGQP), 224–246 (EPGNNGNPGEEGQTGAQGPTGQP), and 255–271 (DGTPGQAGPQGAVGADA).

Belongs to the cuticular collagen family. As to quaternary structure, collagen polypeptide chains are complexed within the cuticle by disulfide bonds and other types of covalent cross-links. Post-translationally, may be a substrate of bli-4.

Nematode cuticles are composed largely of collagen-like proteins. The cuticle functions both as an exoskeleton and as a barrier to protect the worm from its environment. This Caenorhabditis elegans protein is Cuticle collagen dpy-5 (dpy-5).